The chain runs to 146 residues: Large ribosomal subunit protein uL15 (146 aa).

Positions 1 to 51 (MQLNTLKPAEGSKKNRRRVGRGIGSGLGKTAGRGHKGQKSRSGGFHKVGFE) are disordered. Gly residues predominate over residues 21-31 (RGIGSGLGKTA).

It belongs to the universal ribosomal protein uL15 family. In terms of assembly, part of the 50S ribosomal subunit.

Binds to the 23S rRNA. The sequence is that of Large ribosomal subunit protein uL15 from Polynucleobacter asymbioticus (strain DSM 18221 / CIP 109841 / QLW-P1DMWA-1) (Polynucleobacter necessarius subsp. asymbioticus).